Reading from the N-terminus, the 945-residue chain is Leucine--tRNA ligase (945 aa).

A 'HIGH' region motif is present at residues 66-77; sequence PYPSGTGLHVGH. The 'KMSKS' region signature appears at 716-720; it reads KMGKS. Residue Lys-719 participates in ATP binding.

Belongs to the class-I aminoacyl-tRNA synthetase family.

The protein resides in the cytoplasm. The enzyme catalyses tRNA(Leu) + L-leucine + ATP = L-leucyl-tRNA(Leu) + AMP + diphosphate. The polypeptide is Leucine--tRNA ligase (Rhodococcus jostii (strain RHA1)).